Reading from the N-terminus, the 147-residue chain is uncharacterized protein (147 aa).

A helical membrane pass occupies residues 69–89 (IFFFLSLYLSSIKIPMLILNI).

Its subcellular location is the membrane. This is an uncharacterized protein from Saccharomyces cerevisiae (strain ATCC 204508 / S288c) (Baker's yeast).